We begin with the raw amino-acid sequence, 221 residues long: Sperm acrosome membrane-associated protein 3 (221 aa).

Topologically, residues 1-69 are cytoplasmic; that stretch reads MGICMSMYTQ…EARSRAPRRQ (69 aa). A helical; Signal-anchor for type II membrane protein membrane pass occupies residues 70–90; the sequence is LCPPGITWLALAYLLSCLLAS. Topologically, residues 91-221 are extracellular; the sequence is SKAKVFSRCE…LSDWVDGCDF (131 aa). Positions 94 to 221 constitute a C-type lysozyme domain; that stretch reads KVFSRCELAK…LSDWVDGCDF (128 aa). 4 disulfide bridges follow: Cys-99–Cys-219, Cys-123–Cys-207, Cys-157–Cys-172, and Cys-168–Cys-186.

Belongs to the glycosyl hydrolase 22 family. In terms of assembly, interacts with ASTL. As to expression, the processed form is expressed in sperm (at protein level). Expressed strongly in testis and epididymis and weakly in pancreas.

It localises to the cytoplasmic vesicle. The protein resides in the secretory vesicle. Its subcellular location is the acrosome membrane. It is found in the secreted. Sperm surface membrane protein that may be involved in sperm-egg plasma membrane adhesion and fusion during fertilization. It could be a potential receptor for the egg oligosaccharide residue N-acetylglucosamine, which is present in the extracellular matrix over the egg plasma membrane. The processed form has no detectable bacteriolytic activity in vitro. This chain is Sperm acrosome membrane-associated protein 3 (Spaca3), found in Mus musculus (Mouse).